A 57-amino-acid chain; its full sequence is Metallothionein (57 aa).

The protein belongs to the metallothionein superfamily. Type 14 family.

Its function is as follows. This protein complexes cadmium, zinc and copper. The polypeptide is Metallothionein (mtnA) (Thermostichus vulcanus (Synechococcus vulcanus)).